Here is a 557-residue protein sequence, read N- to C-terminus: Kelch repeat and BTB domain-containing protein 2 (557 aa).

Residues 26–95 (CDVIITIRDG…LYNRHISSMN (70 aa)) form the BTB domain. Residues 143-223 (IVKYIKRMLM…CIDIQNLDKK (81 aa)) enclose the BACK domain. 3 Kelch repeats span residues 305–352 (EIII…VIDD), 353–399 (TIYA…VLDQ), and 415–464 (SVHA…SHED).

Interacts (via BTB domain) with host CUL3.

It localises to the host cytoplasm. Functionally, probable substrate-specific adapter of CUL3-containing E3 ubiquitin-protein ligases which mediate the ubiquitination and subsequent proteasomal degradation of host target proteins. The sequence is that of Kelch repeat and BTB domain-containing protein 2 (KBTB2) from Cowpox virus (strain Brighton Red) (CPV).